A 159-amino-acid chain; its full sequence is Ribosomal RNA large subunit methyltransferase H (159 aa).

S-adenosyl-L-methionine contacts are provided by residues L76, G108, and 127-132 (FSKMTF).

The protein belongs to the RNA methyltransferase RlmH family. In terms of assembly, homodimer.

The protein resides in the cytoplasm. It carries out the reaction pseudouridine(1915) in 23S rRNA + S-adenosyl-L-methionine = N(3)-methylpseudouridine(1915) in 23S rRNA + S-adenosyl-L-homocysteine + H(+). Specifically methylates the pseudouridine at position 1915 (m3Psi1915) in 23S rRNA. This is Ribosomal RNA large subunit methyltransferase H from Staphylococcus saprophyticus subsp. saprophyticus (strain ATCC 15305 / DSM 20229 / NCIMB 8711 / NCTC 7292 / S-41).